The sequence spans 260 residues: Archaerhodopsin-1 (260 aa).

Positions 1–6 (MDPIAL) are excised as a propeptide. Residues 7–20 (TAAVGADLLGDGRP) lie on the Extracellular side of the membrane. Residues 21–42 (ETLWLGIGTLLMLIGTFYFIVK) form a helical membrane-spanning segment. Over 43-51 (GWGVTDKEA) the chain is Cytoplasmic. Residues 52–73 (REYYSITILVPGIASAAYLSMF) form a helical membrane-spanning segment. The Extracellular segment spans residues 74-91 (FGIGLTEVQVGSEMLDIY). Residues 92–113 (YARYADWLFTTPLLLLDLALLA) form a helical membrane-spanning segment. Residues 114-116 (KVD) are Cytoplasmic-facing. A helical membrane pass occupies residues 117–139 (RVSIGTLVGVDALMIVTGLVGAL). The Extracellular segment spans residues 140 to 143 (SHTP). Residues 144–172 (LARYTWWLFSTICMIVVLYFLATSLRAAA) form a helical membrane-spanning segment. Residues 173–176 (KERG) are Cytoplasmic-facing. A helical transmembrane segment spans residues 177-204 (PEVASTFNTLTALVLVLWTAYPILWIIG). Over 205–212 (TEGAGVVG) the chain is Extracellular. Residues 213-245 (LGIETLLFMVLDVTAKVGFGFILLRSRAILGDT) traverse the membrane as a helical segment. Position 228 is an N6-(retinylidene)lysine (lysine 228). Topologically, residues 246–260 (EAPEPSAGAEASAAD) are cytoplasmic.

Belongs to the archaeal/bacterial/fungal opsin family.

It is found in the cell membrane. Its function is as follows. Light-driven proton pump. It may interact with bacterioruberin in the claret membrane. This is Archaerhodopsin-1 from Halorubrum ezzemoulense (Halorubrum chaoviator).